Reading from the N-terminus, the 276-residue chain is Large ribosomal subunit protein uL2c (276 aa).

A disordered region spans residues Arg221–Lys276. A compositionally biased stretch (basic residues) spans Lys258–Lys276.

The protein belongs to the universal ribosomal protein uL2 family. As to quaternary structure, part of the 50S ribosomal subunit.

It localises to the plastid. Its subcellular location is the chloroplast. The chain is Large ribosomal subunit protein uL2c (rpl2) from Stigeoclonium helveticum (Green alga).